The primary structure comprises 79 residues: WAP four-disulfide core domain protein 10A (79 aa).

The signal sequence occupies residues 1-21 (MAPQTLLPVLVLCVLLLQAQG). The WAP domain occupies 34-79 (LSPEIKVCQQQPKLYLCKHLCESHRDCQANNICCSTYCGNVCMSIL). 4 cysteine pairs are disulfide-bonded: Cys-41–Cys-67, Cys-50–Cys-71, Cys-54–Cys-66, and Cys-60–Cys-75.

The protein localises to the secreted. In Homo sapiens (Human), this protein is WAP four-disulfide core domain protein 10A (WFDC10A).